A 1174-amino-acid chain; its full sequence is MDFASSVQRQSMFHGGADFASYCLPNRMISAKLCPKGLGGTRFWDPMIDSKVRSAIRSKRNVSYRSSLTLNADFNGRFYGHLLPAKPQNVPLGFRLLCQSSDSVGDLVGNDRNLEFAEGSDDREVTFSKEEKDTREQDSAPSLEELRDLLNKATKELEVASLNSTMFEEKAQRISEVAIALKDEAASAWNDVNQTLNVVQEAVDEESVAKEAVQKATMALSLAEARLQVALESLEAEGYNTSEESEVRDGVKDKEEALLSAKADIKECQENLASCEEQLRRLQVKKDELQKEVDRLNEAAERAQISALKAEEDVANIMVLAEQAVAFELEATQRVNDAEIALQRAEKTLFGSQTQETTQGKVLDGKNTIVGEDEVLSEIVDVSHQAERDLVVVGVSSDVGTQSYESDNENGKPTADFAKEAEGEAEKSKNVVLTKKQEVQKDLPRESSSHNGTKTSLKKSSRFFPASFFSSNGDGTATVFESLVESAKQQWPKLILGFTLLGAGVAIYSNGVGRNNQLPQQPNIVSTSAEDVSSSTKPLIRQMQKLPKRIKKLLEMFPQQEVNEEEASLLDVLWLLLASVIFVPLFQKIPGGSPVLGYLAAGILIGPYGLSIIRNVHGTKAIAEFGVVFLLFNIGLELSVERLSSMKKYVFGLGSAQVLVTAAVIGLITHYVAGQAGPAAIVIGNGLALSSTAVVLQVLQERGESTSRHGRATFSVLLFQDLAVVVLLILIPLISPNSSKGGIGFQAIAEALGLAAIKAAVAITGIIAGGRLLLRPIYKQIAENRNAEIFSANTLLVILGTSLLTARAGLSMALGAFLAGLLLAETEFSLQVESDIAPYRGLLLGLFFMTVGMSIDPKLLLANFPLIMGTLGLLLVGKTILVVIIGKLFGISIISAVRVGLLLAPGGEFAFVAFGEAVNQGIMTPQLSSLLFLVVGISMALTPWLAAGGQLIASRFELQDVRSLLPVESETDDLQGHIIICGFGRIGQIIAQLLSERLIPFVALDVSSDRVAIGRSLDLPVYFGDAGSREVLHKIGADRACAAAIALDTPGANYRCVWALSKYFPNVKTFVRAHDVDHGLNLEKAGATAVVPETLEPSLQLAAAVLAQAKLPTSEIATTINEFRSRHLSELAELCEASGSSLGYGFSRSTSKPKPPSPSETSDDNQIIEGTLAI.

A chloroplast-targeting transit peptide spans 1-57; that stretch reads MDFASSVQRQSMFHGGADFASYCLPNRMISAKLCPKGLGGTRFWDPMIDSKVRSAIR. Topologically, residues 58–565 are stromal; it reads SKRNVSYRSS…MFPQQEVNEE (508 aa). A disordered region spans residues 119–141; that stretch reads GSDDREVTFSKEEKDTREQDSAP. A coiled-coil region spans residues 142–350; it reads SLEELRDLLN…ALQRAEKTLF (209 aa). Position 170 is an N6-acetyllysine; by NSI (lysine 170). Basic and acidic residues predominate over residues 420–448; that stretch reads EAEGEAEKSKNVVLTKKQEVQKDLPRESS. The tract at residues 420 to 457 is disordered; it reads EAEGEAEKSKNVVLTKKQEVQKDLPRESSSHNGTKTSL. A helical transmembrane segment spans residues 566–586; the sequence is EASLLDVLWLLLASVIFVPLF. The Chloroplast intermembrane segment spans residues 587–592; the sequence is QKIPGG. Residues 593 to 613 traverse the membrane as a helical segment; it reads SPVLGYLAAGILIGPYGLSII. Topologically, residues 614–620 are stromal; it reads RNVHGTK. The chain crosses the membrane as a helical span at residues 621–641; the sequence is AIAEFGVVFLLFNIGLELSVE. Over 642–648 the chain is Chloroplast intermembrane; sequence RLSSMKK. Residues 649-669 form a helical membrane-spanning segment; it reads YVFGLGSAQVLVTAAVIGLIT. The Stromal segment spans residues 670–678; it reads HYVAGQAGP. Residues 679 to 699 form a helical membrane-spanning segment; that stretch reads AAIVIGNGLALSSTAVVLQVL. Residues 700–713 are Chloroplast intermembrane-facing; that stretch reads QERGESTSRHGRAT. A helical transmembrane segment spans residues 714 to 734; sequence FSVLLFQDLAVVVLLILIPLI. Residues 735–746 are Stromal-facing; sequence SPNSSKGGIGFQ. The chain crosses the membrane as a helical span at residues 747-767; it reads AIAEALGLAAIKAAVAITGII. Topologically, residues 768–807 are chloroplast intermembrane; the sequence is AGGRLLLRPIYKQIAENRNAEIFSANTLLVILGTSLLTAR. A helical membrane pass occupies residues 808–828; it reads AGLSMALGAFLAGLLLAETEF. Residues 829 to 841 lie on the Stromal side of the membrane; that stretch reads SLQVESDIAPYRG. Residues 842–862 form a helical membrane-spanning segment; it reads LLLGLFFMTVGMSIDPKLLLA. Residues 863–865 lie on the Chloroplast intermembrane side of the membrane; it reads NFP. The chain crosses the membrane as a helical span at residues 866 to 886; it reads LIMGTLGLLLVGKTILVVIIG. At 887 to 898 the chain is on the stromal side; it reads KLFGISIISAVR. Residues 899-919 form a helical membrane-spanning segment; that stretch reads VGLLLAPGGEFAFVAFGEAVN. The Chloroplast intermembrane segment spans residues 920–928; that stretch reads QGIMTPQLS. Residues 929-949 form a helical membrane-spanning segment; it reads SLLFLVVGISMALTPWLAAGG. Residues 950–1174 are Stromal-facing; sequence QLIASRFELQ…NQIIEGTLAI (225 aa). The RCK N-terminal domain maps to 975 to 1092; it reads QGHIIICGFG…EKAGATAVVP (118 aa). Residues 1141 to 1174 form a disordered region; sequence SLGYGFSRSTSKPKPPSPSETSDDNQIIEGTLAI.

This sequence belongs to the monovalent cation:proton antiporter 2 (CPA2) transporter (TC 2.A.37) family. KEA (TC 2.A.37.1) subfamily. Post-translationally, acetylated at Lys-170 by the stromal acetyltransferase enzyme NSI. As to expression, detected in leaves, stems and flowers. Expressed in shoots and roots. Mainly localized to leaf veins, hypocotyls, mesophylls and guard cells. Accumulates at high levels in small and dividing plastids (at protein level).

It is found in the plastid. Its subcellular location is the chloroplast inner membrane. The protein localises to the plastid inner membrane. It carries out the reaction K(+)(in) + H(+)(out) = K(+)(out) + H(+)(in). With respect to regulation, repressed by sodium ions Na(+). Electroneutral K(+)/H(+) efflux antiporter modulating monovalent cation and pH homeostasis in plastids, especially during plastid division and thylakoid membrane formation. Transports K(+) and Cs(+) preferentially relative to Na(+) or Li(+). May function in osmotic adjustment. Collaboratively with KEA1, adjusts alkaline stromal pH upon light to dark transitions in plastids. Together with KEA1, critical for chloroplast development, including chloroplast RNA-metabolism (e.g. rRNA maturation, polysome loading and RNA-protein interactions) and plastid gene expression (PGE), ion homeostasis, and photosynthesis. Contributes, during early seedling development, to the regulation of photosynthesis and abscisic acid- (ABA-) mediated primary root growth in a sucrose-dependent manner. Involved in the regulation of reactive oxygen and nitrogen species (ROS and RNS) metabolism. Required in roots for rapid hyperosmotic-induced Ca(2+) responses and for osmo-sensory potentiation in hyperosmotic conditions. May counteract resilience to drought and salt stress, involving photorespiratory pathway and stomata closure. This chain is K(+) efflux antiporter 2, chloroplastic, found in Arabidopsis thaliana (Mouse-ear cress).